A 360-amino-acid chain; its full sequence is Phospho-N-acetylmuramoyl-pentapeptide-transferase (360 aa).

Transmembrane regions (helical) follow at residues 18-38 (VFSY…FLSL), 72-92 (PTMG…MWAY), 94-114 (SNPY…VGFV), 132-152 (WKYF…YAVG), 168-188 (IMPQ…VGTS), 199-219 (GLAI…AWAT), 236-256 (AGEL…FLWF), 263-283 (VFMG…IAVL), 288-308 (FLLL…ILQV), and 338-358 (VIVR…ATLK).

The protein belongs to the glycosyltransferase 4 family. MraY subfamily. Mg(2+) serves as cofactor.

It is found in the cell inner membrane. The catalysed reaction is UDP-N-acetyl-alpha-D-muramoyl-L-alanyl-gamma-D-glutamyl-meso-2,6-diaminopimeloyl-D-alanyl-D-alanine + di-trans,octa-cis-undecaprenyl phosphate = di-trans,octa-cis-undecaprenyl diphospho-N-acetyl-alpha-D-muramoyl-L-alanyl-D-glutamyl-meso-2,6-diaminopimeloyl-D-alanyl-D-alanine + UMP. It functions in the pathway cell wall biogenesis; peptidoglycan biosynthesis. Functionally, catalyzes the initial step of the lipid cycle reactions in the biosynthesis of the cell wall peptidoglycan: transfers peptidoglycan precursor phospho-MurNAc-pentapeptide from UDP-MurNAc-pentapeptide onto the lipid carrier undecaprenyl phosphate, yielding undecaprenyl-pyrophosphoryl-MurNAc-pentapeptide, known as lipid I. The polypeptide is Phospho-N-acetylmuramoyl-pentapeptide-transferase (Serratia proteamaculans (strain 568)).